Reading from the N-terminus, the 310-residue chain is Protease HtpX homolog (310 aa).

Transmembrane regions (helical) follow at residues 16-36 and 55-75; these read NAVL…VDAI and IFPT…LVCI. Histidine 166 lines the Zn(2+) pocket. Glutamate 167 is an active-site residue. Histidine 170 is a binding site for Zn(2+). 2 helical membrane passes run 182-202 and 214-234; these read VGIL…FFMG and MILW…QMYL. Glutamate 239 contacts Zn(2+).

Belongs to the peptidase M48B family. Zn(2+) is required as a cofactor.

The protein localises to the cell inner membrane. The sequence is that of Protease HtpX homolog from Helicobacter pylori (strain J99 / ATCC 700824) (Campylobacter pylori J99).